The following is a 119-amino-acid chain: Large ribosomal subunit protein uL18 (119 aa).

Belongs to the universal ribosomal protein uL18 family. As to quaternary structure, part of the 50S ribosomal subunit; part of the 5S rRNA/L5/L18/L25 subcomplex. Contacts the 5S and 23S rRNAs.

This is one of the proteins that bind and probably mediate the attachment of the 5S RNA into the large ribosomal subunit, where it forms part of the central protuberance. This Clostridium botulinum (strain Loch Maree / Type A3) protein is Large ribosomal subunit protein uL18.